Reading from the N-terminus, the 670-residue chain is DNA ligase (670 aa).

NAD(+)-binding positions include 34 to 38, 83 to 84, and E117; these read DAEYD and SL. K119 acts as the N6-AMP-lysine intermediate in catalysis. 4 residues coordinate NAD(+): R140, E177, K293, and K317. 4 residues coordinate Zn(2+): C411, C414, C429, and C434. The region spanning 591 to 670 is the BRCT domain; it reads KVGGRFTGKT…DEFLAMLEEG (80 aa).

This sequence belongs to the NAD-dependent DNA ligase family. LigA subfamily. Requires Mg(2+) as cofactor. Mn(2+) is required as a cofactor.

It catalyses the reaction NAD(+) + (deoxyribonucleotide)n-3'-hydroxyl + 5'-phospho-(deoxyribonucleotide)m = (deoxyribonucleotide)n+m + AMP + beta-nicotinamide D-nucleotide.. Functionally, DNA ligase that catalyzes the formation of phosphodiester linkages between 5'-phosphoryl and 3'-hydroxyl groups in double-stranded DNA using NAD as a coenzyme and as the energy source for the reaction. It is essential for DNA replication and repair of damaged DNA. The chain is DNA ligase from Geobacter sulfurreducens (strain ATCC 51573 / DSM 12127 / PCA).